The primary structure comprises 364 residues: Peptide chain release factor 1 (364 aa).

Gln-238 bears the N5-methylglutamine mark. Basic and acidic residues predominate over residues 286-297; sequence DEKRQAEEDSTR. Residues 286–315 form a disordered region; it reads DEKRQAEEDSTRRNLVGSGDRSERIRTYNY.

This sequence belongs to the prokaryotic/mitochondrial release factor family. Methylated by PrmC. Methylation increases the termination efficiency of RF1.

It localises to the cytoplasm. Its function is as follows. Peptide chain release factor 1 directs the termination of translation in response to the peptide chain termination codons UAG and UAA. This Idiomarina loihiensis (strain ATCC BAA-735 / DSM 15497 / L2-TR) protein is Peptide chain release factor 1.